The following is a 313-amino-acid chain: DNA-directed RNA polymerase subunit alpha (313 aa).

The interval 1–226 (MLEIEKPKIE…EHMRLFLGLT (226 aa)) is alpha N-terminal domain (alpha-NTD). Residues 242 to 313 (TRDRLMDMSI…LGLSLRSSEE (72 aa)) form an alpha C-terminal domain (alpha-CTD) region.

The protein belongs to the RNA polymerase alpha chain family. In terms of assembly, homodimer. The RNAP catalytic core consists of 2 alpha, 1 beta, 1 beta' and 1 omega subunit. When a sigma factor is associated with the core the holoenzyme is formed, which can initiate transcription.

It catalyses the reaction RNA(n) + a ribonucleoside 5'-triphosphate = RNA(n+1) + diphosphate. Its function is as follows. DNA-dependent RNA polymerase catalyzes the transcription of DNA into RNA using the four ribonucleoside triphosphates as substrates. This chain is DNA-directed RNA polymerase subunit alpha, found in Moorella thermoacetica (strain ATCC 39073 / JCM 9320).